Reading from the N-terminus, the 74-residue chain is Serine rich endogenous peptide 16 (74 aa).

The signal sequence occupies residues 1–31 (MATKISHLVSLLLSLLLLLLFISSQVGFTEA). Residues 29–74 (TEAKRDERKKMSSPPIPSPLIPSPPIPPPPPRFYVPPSKSRRGKGP) are disordered. Positions 42-62 (PPIPSPLIPSPPIPPPPPRFY) are enriched in pro residues. Residues 60–74 (RFYVPPSKSRRGKGP) carry the SCOOP motif motif. The short motif at 66-68 (SKS) is the SxS motif essential for MIK2 binding element.

Belongs to the serine rich endogenous peptide (SCOOP) phytocytokine family. In terms of assembly, interacts with MIK2 (via extracellular leucine-rich repeat domain); this interaction triggers the formation of complex between MIK2 and the BAK1/SERK3 and SERK4 coreceptors, and subsequent BAK1 activation by phosphorylation.

It localises to the cell membrane. It is found in the secreted. Its subcellular location is the extracellular space. The protein localises to the apoplast. Its function is as follows. Brassicaceae-specific phytocytokine (plant endogenous peptide released into the apoplast) perceived by MIK2 in a BAK1/SERK3 and SERK4 coreceptors-dependent manner, that modulates various physiological and antimicrobial processes including growth prevention and reactive oxygen species (ROS) response regulation. This Arabidopsis thaliana (Mouse-ear cress) protein is Serine rich endogenous peptide 16.